Here is a 154-residue protein sequence, read N- to C-terminus: MEVRTVEGGFIGKGLRMGVVVARFNDLLTGELLKGALDCFERHGVEEVDVVKVPGSFEIPLVAKKMAESGRYDAVLALGAVVRGETKHFDLVANEVAKGVANVSLDTGVPVIFGVITVEDELQGFNRAGVKSNKGFEYAMAALEMADLMRKMEE.

Residues Phe-24, 56-58 (SFE), and 80-82 (AVV) contribute to the 5-amino-6-(D-ribitylamino)uracil site. (2S)-2-hydroxy-3-oxobutyl phosphate is bound at residue 85–86 (ET). The active-site Proton donor is His-88. Phe-113 serves as a coordination point for 5-amino-6-(D-ribitylamino)uracil. Arg-127 serves as a coordination point for (2S)-2-hydroxy-3-oxobutyl phosphate.

The protein belongs to the DMRL synthase family.

The enzyme catalyses (2S)-2-hydroxy-3-oxobutyl phosphate + 5-amino-6-(D-ribitylamino)uracil = 6,7-dimethyl-8-(1-D-ribityl)lumazine + phosphate + 2 H2O + H(+). It functions in the pathway cofactor biosynthesis; riboflavin biosynthesis; riboflavin from 2-hydroxy-3-oxobutyl phosphate and 5-amino-6-(D-ribitylamino)uracil: step 1/2. In terms of biological role, catalyzes the formation of 6,7-dimethyl-8-ribityllumazine by condensation of 5-amino-6-(D-ribitylamino)uracil with 3,4-dihydroxy-2-butanone 4-phosphate. This is the penultimate step in the biosynthesis of riboflavin. In Thermococcus gammatolerans (strain DSM 15229 / JCM 11827 / EJ3), this protein is 6,7-dimethyl-8-ribityllumazine synthase.